Consider the following 130-residue polypeptide: MDFWKFFPFLALSTIWVLCLASSLQAAPFRSALESSLDLGTLGDQEKHLLLAALMQDYEQMKARKLEQEEQETKGSRVTAQKRSCNTATCVTHRLADLLSRSGGVLKDNFVPTDVGSEAFGRRRRRDLQA.

The signal sequence occupies residues 1–26 (MDFWKFFPFLALSTIWVLCLASSLQA). A propeptide spanning residues 27–82 (APFRSALESSLDLGTLGDQEKHLLLAALMQDYEQMKARKLEQEEQETKGSRVTAQK) is cleaved from the precursor. A disulfide bridge links Cys-85 with Cys-90. Residue Phe-120 is modified to Phenylalanine amide. The propeptide occupies 127–130 (DLQA).

This sequence belongs to the calcitonin family. Detected in nerve cells of cerebrum, hippocampus and pons/midbrain in newborns, and only in nerve cells of pons/midbrain in adult.

It localises to the secreted. Functionally, CALCB/CGRP2 is a peptide hormone that induces vasodilation mediated by the CALCRL-RAMP1 receptor complex. Dilates a variety of vessels including the coronary, cerebral and systemic vasculature. Its abundance in the CNS also points toward a neurotransmitter or neuromodulator role. This is Calcitonin gene-related peptide 2 from Mus musculus (Mouse).